A 514-amino-acid polypeptide reads, in one-letter code: Cilia- and flagella-associated protein 53 (514 aa).

Coiled-coil stretches lie at residues Ile-91–Phe-148 and Lys-203–Glu-474.

It belongs to the CFAP53 family. As to quaternary structure, microtubule inner protein component of sperm flagellar doublet microtubules. Interacts with PIERCE1 and PIERCE2; the interactions link outer dynein arms docking complex (ODA-DC) to the internal microtubule inner proteins (MIP) in cilium axoneme. Interacts with CCDC38. Interacts with CCDC42 and IFT88. Interacts with centriolar satellite proteins PIBF1/CEP90 and PCM1. Interacts with dyneins DNAIC1, DNAIC2 AND DNAH11 and with ODA-DC component ODAD4/TTC25. In terms of tissue distribution, expressed in skin fibroblasts (at protein level). Expressed in nasal respiratory epithelial cells (at protein level). Expressed in airway epithelial cells.

Its subcellular location is the cytoplasm. The protein resides in the cytoskeleton. It localises to the cilium axoneme. The protein localises to the flagellum axoneme. It is found in the microtubule organizing center. Its subcellular location is the centrosome. The protein resides in the centriole. It localises to the centriolar satellite. The protein localises to the spindle pole. It is found in the cell projection. Its subcellular location is the cilium. Its function is as follows. Microtubule inner protein (MIP) part of the dynein-decorated doublet microtubules (DMTs) in cilia axoneme, which is required for motile cilia beating. Regulates motility patterns of both 9+0 and 9+2 motile cilia through differential localization and recruitment of axonemal dynein components. Required for centriolar satellite integrity and non-motile cilium assembly. Required for motile cilium formation. Through its role in the beating of primary cilia, involved in the establishment of organ laterality during embryogenesis. Required for sperm flagellum biogenesis and is essential for male fertility. This chain is Cilia- and flagella-associated protein 53, found in Homo sapiens (Human).